The chain runs to 79 residues: MTVDNNVLDLRKLRCPEPIMLLRKKIREIKNGTTLLILSDDPSTIREIPQYCKFMHHKLLKINTKDTIYKFWIQKTHKM.

Cys-15 (cysteine persulfide intermediate) is an active-site residue.

Belongs to the sulfur carrier protein TusA family. In terms of assembly, interacts with IscS.

The protein resides in the cytoplasm. The protein operates within tRNA modification. Sulfur carrier protein involved in sulfur trafficking in the cell. Part of a sulfur-relay system required for 2-thiolation during synthesis of 2-thiouridine of the modified wobble base 5-methylaminomethyl-2-thiouridine (mnm(5)s(2)U) in tRNA. Interacts with IscS and stimulates its cysteine desulfurase activity. Accepts an activated sulfur from IscS, which is then transferred to TusD, and thus determines the direction of sulfur flow from IscS to 2-thiouridine formation. Also appears to be involved in sulfur transfer for the biosynthesis of molybdopterin. The chain is Sulfur carrier protein TusA from Buchnera aphidicola subsp. Baizongia pistaciae (strain Bp).